The primary structure comprises 66 residues: Beta-defensin 134 (66 aa).

The signal sequence occupies residues 1-19 (MKPLLVVFVFLFLWDPVLA). 3 disulfides stabilise this stretch: C32–C58, C38–C52, and C42–C59.

It belongs to the beta-defensin family.

The protein resides in the secreted. Its function is as follows. Has antibacterial activity. The protein is Beta-defensin 134 (DEFB134) of Homo sapiens (Human).